Here is a 147-residue protein sequence, read N- to C-terminus: UPF0306 protein YhbP (147 aa).

It belongs to the UPF0306 family.

The sequence is that of UPF0306 protein YhbP from Salmonella paratyphi A (strain AKU_12601).